We begin with the raw amino-acid sequence, 274 residues long: Copper chaperone for superoxide dismutase (274 aa).

Residues 11 to 74 (ACMLEFAVQM…LLEDTGRQAV (64 aa)) enclose the HMA domain. Cu cation is bound by residues Cys-22 and Cys-25. Residue Lys-76 forms a Glycyl lysine isopeptide (Lys-Gly) (interchain with G-Cter in ubiquitin) linkage. The superoxide dismutase-like stretch occupies residues 88–234 (AAVAILGGSG…LACGIIARSA (147 aa)). Cys-141 and Cys-227 are joined by a disulfide. Zn(2+) is bound by residues His-147, His-155, His-164, and Asp-167. Glycyl lysine isopeptide (Lys-Gly) (interchain with G-Cter in ubiquitin) cross-links involve residues Lys-189, Lys-216, and Lys-241. 2 residues coordinate Cu cation: Cys-244 and Cys-246.

In the C-terminal section; belongs to the Cu-Zn superoxide dismutase family. In terms of assembly, homodimer, and heterodimer with SOD1. Interacts with COMMD1. Interacts with XIAP/BIRC4. Interacts with SLC31A1(via C-terminal domain); this interaction is Cu(1+)-mediated. The heterodimer CCS:SOD1 interacts with SLC31A1; this heterotrimer is Cu(1+)-mediated and its maintenance is regulated through SOD1 activation. Cu(2+) serves as cofactor. The cofactor is Zn(2+). Ubiquitinion by XIAP/BIRC4 leads to enhancement of its chaperone activity toward its physiologic target, SOD1, rather than proteasomal degradation. XIAP/BIRC4 preferentially ubiquitinates at Lys-241.

It localises to the cytoplasm. Its function is as follows. Delivers copper to copper zinc superoxide dismutase (SOD1). In Sus scrofa (Pig), this protein is Copper chaperone for superoxide dismutase.